Reading from the N-terminus, the 452-residue chain is Lysine-rich nucleolar protein 1 (452 aa).

3 disordered regions span residues Met1–Pro28, Val55–Gly161, and Arg184–Asp305. A Glycyl lysine isopeptide (Lys-Gly) (interchain with G-Cter in SUMO2) cross-link involves residue Lys7. Basic residues predominate over residues Leu65–His75. A compositionally biased stretch (basic and acidic residues) spans Ile78–His98. A Phosphoserine modification is found at Ser112. A Glycyl lysine isopeptide (Lys-Gly) (interchain with G-Cter in SUMO2) cross-link involves residue Lys126. Residues Thr127–Arg139 are compositionally biased toward basic and acidic residues. A Phosphoserine modification is found at Ser128. Composition is skewed to basic residues over residues Val140–Lys151 and Ser258–Lys267. Residue Ser258 is modified to Phosphoserine. A Glycyl lysine isopeptide (Lys-Gly) (interchain with G-Cter in SUMO2) cross-link involves residue Lys280. Positions Val293 to Asp305 are enriched in acidic residues. An interaction with ZNF106 region spans residues Glu300 to Asp452. Thr304 is subject to Phosphothreonine. Residues Lys313, Lys347, Lys367, Lys369, and Lys401 each participate in a glycyl lysine isopeptide (Lys-Gly) (interchain with G-Cter in SUMO2) cross-link. Arg424 carries the omega-N-methylarginine modification. A Glycyl lysine isopeptide (Lys-Gly) (interchain with G-Cter in SUMO2) cross-link involves residue Lys436.

In terms of assembly, interacts with ZNF106.

It localises to the nucleus. It is found in the nucleolus. This is Lysine-rich nucleolar protein 1 (KNOP1) from Bos taurus (Bovine).